The chain runs to 403 residues: S-adenosylmethionine synthase (403 aa).

An ATP-binding site is contributed by histidine 15. Aspartate 17 lines the Mg(2+) pocket. Glutamate 43 serves as a coordination point for K(+). Positions 56 and 99 each coordinate L-methionine. The interval 99-109 is flexible loop; it reads QSPDINQGVDR. Residues 166-168, 232-233, aspartate 241, 247-248, alanine 264, and lysine 268 contribute to the ATP site; these read DAK, KF, and RK. Aspartate 241 contributes to the L-methionine binding site. An L-methionine-binding site is contributed by lysine 272.

This sequence belongs to the AdoMet synthase family. Homotetramer; dimer of dimers. Mg(2+) serves as cofactor. K(+) is required as a cofactor.

The protein resides in the cytoplasm. It catalyses the reaction L-methionine + ATP + H2O = S-adenosyl-L-methionine + phosphate + diphosphate. It functions in the pathway amino-acid biosynthesis; S-adenosyl-L-methionine biosynthesis; S-adenosyl-L-methionine from L-methionine: step 1/1. Catalyzes the formation of S-adenosylmethionine (AdoMet) from methionine and ATP. The overall synthetic reaction is composed of two sequential steps, AdoMet formation and the subsequent tripolyphosphate hydrolysis which occurs prior to release of AdoMet from the enzyme. This Xanthomonas campestris pv. campestris (strain 8004) protein is S-adenosylmethionine synthase.